Consider the following 322-residue polypeptide: Protein SEC13 homolog (322 aa).

Residue Val2 is modified to N-acetylvaline. WD repeat units lie at residues 11 to 50 (SHED…QILI), 55 to 96 (GHEG…WEKS), 101 to 144 (GHDS…EVKK), 148 to 204 (AHTI…QWKE), 210 to 253 (AHSD…SNTW), and 260 to 299 (KFND…QWVC). Ser184 is subject to Phosphoserine. Residue Ser309 is modified to Phosphoserine.

Belongs to the WD repeat SEC13 family. In terms of assembly, at the nuclear pore: component of the Y-shaped Nup107-160 subcomplex of the nuclear pore complex (NPC). The Nup107-160 subcomplex includes NUP160, NUP133, NUP107, NUP98, NUP85, NUP43, NUP37, SEH1 and SEC13. At the COPII coat complex: interacts with SEC31A and SEC31B. Interacts with SEC16A. Interacts with SEC16B. Component of the GATOR2 subcomplex, composed of MIOS, SEC13, SEH1L, WDR24 and WDR59. The GATOR2 complex interacts with CASTOR1 and CASTOR2; the interaction is negatively regulated by arginine. The GATOR2 complex interacts with SESN1, SESN2 and SESN3; the interaction is negatively regulated by amino acids.

Its subcellular location is the cytoplasmic vesicle. It localises to the COPII-coated vesicle membrane. It is found in the endoplasmic reticulum membrane. The protein resides in the nucleus. The protein localises to the nuclear pore complex. Its subcellular location is the lysosome membrane. The GATOR2 complex is negatively regulated by the upstream amino acid sensors CASTOR1 and SESN2, which sequester the GATOR2 complex in absence of amino acids. In the presence of abundant amino acids, GATOR2 is released from CASTOR1 and SESN2 and activated. Functions as a component of the nuclear pore complex (NPC) and the COPII coat. At the endoplasmic reticulum, SEC13 is involved in the biogenesis of COPII-coated vesicles. Required for the exit of adipsin (CFD/ADN), an adipocyte-secreted protein from the endoplasmic reticulum. In terms of biological role, as a component of the GATOR2 complex, functions as an activator of the amino acid-sensing branch of the mTORC1 signaling pathway. The GATOR2 complex indirectly activates mTORC1 through the inhibition of the GATOR1 subcomplex. GATOR2 probably acts as an E3 ubiquitin-protein ligase toward GATOR1. In the presence of abundant amino acids, the GATOR2 complex mediates ubiquitination of the NPRL2 core component of the GATOR1 complex, leading to GATOR1 inactivation. In the absence of amino acids, GATOR2 is inhibited, activating the GATOR1 complex. Within the GATOR2 complex, SEC13 and SEH1L are required to stabilize the complex. In Homo sapiens (Human), this protein is Protein SEC13 homolog.